Here is a 963-residue protein sequence, read N- to C-terminus: Phosphofurin acidic cluster sorting protein 1 (963 aa).

The segment covering 1–22 (MAERGGAGGGPGGAGGGSGQRG) has biased composition (gly residues). Disordered stretches follow at residues 1–72 (MAER…SSST) and 78–97 (VAVASGSAPPGGPGPGRTPA). An N-acetylalanine modification is found at Ala2. A Phosphoserine modification is found at Ser28. Thr46 is modified (phosphothreonine). Over residues 53–72 (ATSSSSSTSAAAASSSSSST) the composition is skewed to low complexity. Residues 168–175 (ETELQLTF) form an involved in binding to AP-1 region. The residue at position 251 (Tyr251) is a Phosphotyrosine. A compositionally biased stretch (basic and acidic residues) spans 262–273 (GIKSKLSDRSPD). Disordered stretches follow at residues 262-299 (GIKSKLSDRSPDIDNYSEEEEESFSSEQEGSDDPLHGQ) and 377-428 (NPSD…GKDT). Residues 276–293 (NYSEEEEESFSSEQEGSD) show a composition bias toward acidic residues. The stretch at 353 to 377 (HVSREQIREVEEDLDELYDSLEMYN) forms a coiled coil. A phosphoserine mark is found at Ser379 and Ser381. The span at 406 to 428 (MSQSSSQTEIGSLNSKGSLGKDT) shows a compositional bias: polar residues. Ser430 and Ser495 each carry phosphoserine. Disordered regions lie at residues 476-542 (PEKV…HSTQ) and 760-804 (SPST…SMSS). Residues 483-496 (MKSSKTDLQGSASP) show a composition bias toward polar residues. Position 504 is a phosphothreonine (Thr504). A phosphoserine mark is found at Ser519, Ser528, Ser529, Ser531, and Ser534. Over residues 770–804 (SPVVSLTVPSTSPPSSSGLSRDATATPPSSPSMSS) the composition is skewed to low complexity.

It belongs to the PACS family. In terms of assembly, associates with AP-1 and AP-3 but not with AP-2 complexes. Interacts with FURIN. Forms a ternary complex with FURIN and AP-1. Interacts with NPHP1; the interaction is dependent of NPHP1 phosphorylation by CK2. Interacts with PKD2 (via acidic region). Interacts with SORL1. Interacts with WDR37. (Microbial infection) Interacts with HIV-1 Nef. As to quaternary structure, (Microbial infection) Interacts with Epstein-barr virus protein BBLF1.

The protein resides in the golgi apparatus. It localises to the trans-Golgi network. In terms of biological role, coat protein that is involved in the localization of trans-Golgi network (TGN) membrane proteins that contain acidic cluster sorting motifs. Controls the endosome-to-Golgi trafficking of furin and mannose-6-phosphate receptor by connecting the acidic-cluster-containing cytoplasmic domain of these molecules with the adapter-protein complex-1 (AP-1) of endosomal clathrin-coated membrane pits. Involved in HIV-1 nef-mediated removal of MHC-I from the cell surface to the TGN. Required for normal ER Ca2+ handling in lymphocytes. Together with WDR37, it plays an essential role in lymphocyte development, quiescence and survival. Required for stabilizing peripheral lymphocyte populations. The polypeptide is Phosphofurin acidic cluster sorting protein 1 (PACS1) (Homo sapiens (Human)).